Here is a 457-residue protein sequence, read N- to C-terminus: Argininosuccinate lyase (457 aa).

This sequence belongs to the lyase 1 family. Argininosuccinate lyase subfamily.

The protein localises to the cytoplasm. The catalysed reaction is 2-(N(omega)-L-arginino)succinate = fumarate + L-arginine. Its pathway is amino-acid biosynthesis; L-arginine biosynthesis; L-arginine from L-ornithine and carbamoyl phosphate: step 3/3. This chain is Argininosuccinate lyase, found in Sodalis glossinidius (strain morsitans).